The sequence spans 514 residues: Maturase K (514 aa).

Belongs to the intron maturase 2 family. MatK subfamily.

It localises to the plastid. It is found in the chloroplast. Functionally, usually encoded in the trnK tRNA gene intron. Probably assists in splicing its own and other chloroplast group II introns. In Dioon spinulosum (Gum palm), this protein is Maturase K.